Reading from the N-terminus, the 440-residue chain is C-terminal-binding protein 1 (440 aa).

The interaction with GLIS2 1 stretch occupies residues 1–70 (MGSSHLLNKG…EIHEKVLNEA (70 aa)). Residues Ser100, 180-185 (IGLGRV), Asp204, 237-243 (CGLNEHN), 264-266 (TAR), and Asp290 each bind NAD(+). The active site involves Arg266. Residues 288 to 360 (ALDVHESEPF…VNKDHLTAAT (73 aa)) form an interaction with GLIS2 2 region. Glu295 is an active-site residue. Ser300 is subject to Phosphoserine. Residue His315 is the Proton donor of the active site. 315 to 318 (HAAW) contacts NAD(+). Positions 408–440 (SHGLPPVAHPPHAPSPGQTVKPEADRDHASDQL) are disordered. Position 422 is a phosphoserine; by HIPK2 (Ser422). Lys428 is covalently cross-linked (Glycyl lysine isopeptide (Lys-Gly) (interchain with G-Cter in SUMO)). Over residues 429-440 (PEADRDHASDQL) the composition is skewed to basic and acidic residues.

The protein belongs to the D-isomer specific 2-hydroxyacid dehydrogenase family. In terms of assembly, homo- or heterodimer. Heterodimer with CTBP2. Interacts with PRDM16; the interaction represses white adipose tissue (WAT)-specific genes expression. Interacts with GLIS2, FOXP2, HDAC4, HDAC5, HDAC9 and ZNF217. Interacts with ELK3 (via its PXDLS motif). Interacts with RBBP8 (via its PXDLS motif); the interaction is disrupted by binding to adenovirus E1A. Interacts with FOXP1, HIPK2, PNN, NRIP1, MECOM, ZFHX1B and WIZ. Interacts with ZNF366 (via PXDLS motif). Interaction with SATB1 (non-acetylated form); the interaction stabilizes its attachment to DNA and promotes transcription repression. Interacts with BCL6; the interaction is required for BCL6 transcriptional autoinhibition and inhibition of some BCL6 target genes. Interacts with IKZF4. Interacts with MCRIP1 (unphosphorylated form, via the PXDLS motif); competitively inhibiting CTBP-ZEB1 interaction. Interacts with Bassoon/BSN; this interaction targets and anchors CTBP1 to presynapses. Interacts with SIMC1. (Microbial infection) Interacts with Epstein-Barr virus EBNA3. Interacts with Epstein-Barr virus EBNA6; this interaction leads to gene repression, but also seems to interfere with the repressive function of CtBP pre-bound to DNA, leading to EBNA6 mediated up-regulation of many cellular genes. As to quaternary structure, (Microbial infection) Interacts with adenovirus E1A protein (via its C-terminus); the interaction disrupts the interaction of CTBP1 with RBBP8. In terms of assembly, (Microbial infection) Interacts with human adenovirus 5 E1A protein; this interaction seems to potentiate viral replication. NAD(+) serves as cofactor. In terms of processing, the level of phosphorylation appears to be regulated during the cell cycle. Phosphorylation by HIPK2 on Ser-422 induces proteasomal degradation. Post-translationally, ADP-ribosylated; when cells are exposed to brefeldin A. Sumoylation on Lys-428 is promoted by the E3 SUMO-protein ligase CBX4. In terms of tissue distribution, expressed in germinal center B-cells.

The protein resides in the cytoplasm. Its subcellular location is the nucleus. In terms of biological role, corepressor targeting diverse transcription regulators such as GLIS2 or BCL6. Has dehydrogenase activity. Involved in controlling the equilibrium between tubular and stacked structures in the Golgi complex. Functions in brown adipose tissue (BAT) differentiation. This chain is C-terminal-binding protein 1 (CTBP1), found in Homo sapiens (Human).